A 313-amino-acid chain; its full sequence is Acetaldehyde dehydrogenase 3 (313 aa).

13 to 16 (SGNI) provides a ligand contact to NAD(+). Catalysis depends on cysteine 133, which acts as the Acyl-thioester intermediate. Residues 164 to 172 (SAGPGTRAN) and asparagine 291 each bind NAD(+).

This sequence belongs to the acetaldehyde dehydrogenase family.

It carries out the reaction acetaldehyde + NAD(+) + CoA = acetyl-CoA + NADH + H(+). This Paraburkholderia xenovorans (strain LB400) protein is Acetaldehyde dehydrogenase 3.